The chain runs to 265 residues: DNA repair protein RecO (265 aa).

The protein belongs to the RecO family.

Involved in DNA repair and RecF pathway recombination. The sequence is that of DNA repair protein RecO from Mycolicibacterium paratuberculosis (strain ATCC BAA-968 / K-10) (Mycobacterium paratuberculosis).